Consider the following 226-residue polypeptide: Lipoprotein-releasing system ATP-binding protein LolD (226 aa).

Positions 6-226 (IELKSVERHY…TLADGKVVPL (221 aa)) constitute an ABC transporter domain. 42–49 (APSGTGKS) provides a ligand contact to ATP.

It belongs to the ABC transporter superfamily. Lipoprotein translocase (TC 3.A.1.125) family. In terms of assembly, the complex is composed of two ATP-binding proteins (LolD) and two transmembrane proteins (LolC and LolE).

The protein localises to the cell inner membrane. Part of the ABC transporter complex LolCDE involved in the translocation of mature outer membrane-directed lipoproteins, from the inner membrane to the periplasmic chaperone, LolA. Responsible for the formation of the LolA-lipoprotein complex in an ATP-dependent manner. This Mesorhizobium japonicum (strain LMG 29417 / CECT 9101 / MAFF 303099) (Mesorhizobium loti (strain MAFF 303099)) protein is Lipoprotein-releasing system ATP-binding protein LolD.